Reading from the N-terminus, the 410-residue chain is G-protein coupled receptor family C group 5 member B (410 aa).

Positions 1–28 (MFLVLERKMRTHQVFPLPLLLVIASVAS) are cleaved as a signal peptide. Over 29–56 (ENASTSRGCGLDLLPQYVSLCDLDAIWG) the chain is Extracellular. Asn30 is a glycosylation site (N-linked (GlcNAc...) asparagine). A helical membrane pass occupies residues 57–77 (IVVEAVAGAGALITLLLMLIL). The Cytoplasmic portion of the chain corresponds to 78 to 94 (LVRLPFIKDKERKRPVC). The helical transmembrane segment at 95 to 115 (LHFLFLLGTLGLFGLTFAFII) threads the bilayer. Topologically, residues 116–126 (QMDETICSIRR) are extracellular. A helical transmembrane segment spans residues 127–147 (FLWGVLFALCFSCLLSQAWRV). The Cytoplasmic segment spans residues 148-164 (RRLVRQGTSPASWQLVS). The chain crosses the membrane as a helical span at residues 165–185 (LALCLMLVQVIIATEWLVLTV). At 186–199 (LRDTKPACAYEPMD) the chain is on the extracellular side. Residues 200 to 220 (FVMALIYDMVLLAITLAQSLF) form a helical membrane-spanning segment. Topologically, residues 221–234 (TLCGKFKRWKVNGA) are cytoplasmic. The chain crosses the membrane as a helical span at residues 235-255 (FILVTTFLSALIWVVWMTMYL). Over 256 to 271 (FGNSLIKQGDAWSDPT) the chain is Extracellular. Residues 272-292 (LAITLAASGWVFVIFHAIPEI) form a helical membrane-spanning segment. The Cytoplasmic portion of the chain corresponds to 293–410 (HYTLLPPLQE…PPSHTGRHHW (118 aa)). Ser355 is subject to Phosphoserine. The tract at residues 356 to 381 (LEQRSSSLGKKPSSLGNRPSAPFRSN) is disordered. Positions 360 to 371 (SSSLGKKPSSLG) are enriched in low complexity.

This sequence belongs to the G-protein coupled receptor 3 family.

It is found in the cell membrane. The protein resides in the cytoplasmic vesicle membrane. In terms of biological role, G-protein coupled receptor involved in the regulation of cell volume. The chain is G-protein coupled receptor family C group 5 member B (Gprc5b) from Mus musculus (Mouse).